Here is a 238-residue protein sequence, read N- to C-terminus: tRNA1(Val) (adenine(37)-N6)-methyltransferase (238 aa).

It belongs to the methyltransferase superfamily. tRNA (adenine-N(6)-)-methyltransferase family.

It localises to the cytoplasm. It carries out the reaction adenosine(37) in tRNA1(Val) + S-adenosyl-L-methionine = N(6)-methyladenosine(37) in tRNA1(Val) + S-adenosyl-L-homocysteine + H(+). Its function is as follows. Specifically methylates the adenine in position 37 of tRNA(1)(Val) (anticodon cmo5UAC). This is tRNA1(Val) (adenine(37)-N6)-methyltransferase from Shewanella baltica (strain OS185).